The chain runs to 81 residues: Photosystem I iron-sulfur center (81 aa).

4Fe-4S ferredoxin-type domains are found at residues 2–31 and 39–68; these read SHAV…MVPW and IASS…IRVY. Residues Cys11, Cys14, Cys17, Cys21, Cys48, Cys51, Cys54, and Cys58 each coordinate [4Fe-4S] cluster.

The cyanobacterial PSI reaction center is composed of one copy each of PsaA,B,C,D,E,F,I,J,K,L,M and X, and forms trimeric complexes. It depends on [4Fe-4S] cluster as a cofactor.

The protein localises to the cellular thylakoid membrane. The catalysed reaction is reduced [plastocyanin] + hnu + oxidized [2Fe-2S]-[ferredoxin] = oxidized [plastocyanin] + reduced [2Fe-2S]-[ferredoxin]. In terms of biological role, apoprotein for the two 4Fe-4S centers FA and FB of photosystem I (PSI); essential for photochemical activity. FB is the terminal electron acceptor of PSI, donating electrons to ferredoxin. The C-terminus interacts with PsaA/B/D and helps assemble the protein into the PSI complex. Required for binding of PsaD and PsaE to PSI. PSI is a plastocyanin/cytochrome c6-ferredoxin oxidoreductase, converting photonic excitation into a charge separation, which transfers an electron from the donor P700 chlorophyll pair to the spectroscopically characterized acceptors A0, A1, FX, FA and FB in turn. This Prochlorococcus marinus (strain MIT 9312) protein is Photosystem I iron-sulfur center.